Reading from the N-terminus, the 147-residue chain is Hemoglobin subunit beta-1 (147 aa).

V2 bears the N-acetylvaline mark. Residues H3–H147 form the Globin domain. K18 bears the N6-succinyllysine mark. S45 bears the Phosphoserine mark. An N6-succinyllysine modification is found at K60. The heme b site is built by H64 and H93. Residue R105 is modified to Asymmetric dimethylarginine. T124 bears the Phosphothreonine mark.

Belongs to the globin family. Hb1 is a heterotetramer of two alpha chains and two beta-1 chains. As to expression, red blood cells.

Its function is as follows. Involved in oxygen transport from the lung to the various peripheral tissues. The protein is Hemoglobin subunit beta-1 (HBB1) of Chalinolobus morio (Chocolate-wattled bat).